The following is a 110-amino-acid chain: Chloride intracellular channel protein 1 (110 aa).

A2 carries the post-translational modification N-acetylalanine. Residues 2–90 (AEEQPQVELF…EEFLEAVLCP (89 aa)) are required for insertion into the membrane. K13 is modified (N6-acetyllysine). The G-site signature appears at 24 to 27 (CPFS). C24 and C59 are disulfide-bonded. A helical membrane pass occupies residues 26-46 (FSQRLFMVLWLKGVTFNVTTV).

Belongs to the chloride channel CLIC family. Monomer. Homodimer (in vitro). Interacts with TRAPPC2. Dimerization requires a conformation change that leads to the exposure of a large hydrophobic surface. In vivo, this may lead to membrane insertion.

The protein localises to the nucleus. It is found in the nucleus membrane. The protein resides in the cytoplasm. It localises to the cell membrane. Its subcellular location is the endoplasmic reticulum. The catalysed reaction is L-dehydroascorbate + 2 glutathione = glutathione disulfide + L-ascorbate. It carries out the reaction chloride(in) = chloride(out). The enzyme catalyses iodide(out) = iodide(in). It catalyses the reaction thiocyanate(in) = thiocyanate(out). The catalysed reaction is nitrate(in) = nitrate(out). It carries out the reaction bromide(in) = bromide(out). The enzyme catalyses fluoride(in) = fluoride(out). In terms of biological role, in the soluble state, catalyzes glutaredoxin-like thiol disulfide exchange reactions with reduced glutathione as electron donor. Reduces selenite and dehydroascorbate and may act as an antioxidant during oxidative stress response. Can insert into membranes and form voltage-dependent multi-ion conductive channels. Membrane insertion seems to be redox-regulated and may occur only under oxidizing conditions. Involved in regulation of the cell cycle. The chain is Chloride intracellular channel protein 1 (CLIC1) from Sus scrofa (Pig).